The following is a 177-amino-acid chain: Large ribosomal subunit protein uL6 (177 aa).

Belongs to the universal ribosomal protein uL6 family. In terms of assembly, part of the 50S ribosomal subunit.

This protein binds to the 23S rRNA, and is important in its secondary structure. It is located near the subunit interface in the base of the L7/L12 stalk, and near the tRNA binding site of the peptidyltransferase center. The protein is Large ribosomal subunit protein uL6 of Enterobacter sp. (strain 638).